A 352-amino-acid polypeptide reads, in one-letter code: MIAIGLEGSANKIGIGVISHPGPNKTPIILSNLRHTYISPPGEGFLPKDTAIHHRAWVVRLIKQAVQQAGVKIEDIECICYTKGPGMGAPLQSVALAARTISLLWGKPVVGVNHCVGHIEMGRAITKADNPVVLYVSGGNTQVIAYSAQRYRIFGETLDIAIGNCIDRFARTLMIPNNPFPGYNVEQLAKKGKNLVDLPYGVKGMDASFSGILAAADLLAKGLDESLPLEKRLKTEEGELVTREDLCFSLQETIYAMLVEITERAMAHVGSQQVLVVGGVGSNERLQQMMGMMARDRGGSVFATDERFCIDNGIMIAHAGLLEYCTGVVTKMEDTTCTQRFRTDEVFVGWRD.

Residues H114, H118, and Y135 each contribute to the a divalent metal cation site. Residues 135 to 139, D167, G182, E186, and N283 contribute to the substrate site; that span reads YVSGG. D311 is an a divalent metal cation binding site.

Belongs to the KAE1 / TsaD family. Component of the EKC/KEOPS complex composed of at least BUD32, CGI121, GON7, KAE1 and PCC1; the whole complex dimerizes. A divalent metal cation is required as a cofactor.

It is found in the cytoplasm. It localises to the nucleus. The catalysed reaction is L-threonylcarbamoyladenylate + adenosine(37) in tRNA = N(6)-L-threonylcarbamoyladenosine(37) in tRNA + AMP + H(+). Its function is as follows. Component of the EKC/KEOPS complex that is required for the formation of a threonylcarbamoyl group on adenosine at position 37 (t(6)A37) in tRNAs that read codons beginning with adenine. The complex is probably involved in the transfer of the threonylcarbamoyl moiety of threonylcarbamoyl-AMP (TC-AMP) to the N6 group of A37. KAE1 likely plays a direct catalytic role in this reaction, but requires other protein(s) of the complex to fulfill this activity. The EKC/KEOPS complex also promotes both telomere uncapping and telomere elongation. The complex is required for efficient recruitment of transcriptional coactivators. This chain is tRNA N6-adenosine threonylcarbamoyltransferase, found in Phaeosphaeria nodorum (strain SN15 / ATCC MYA-4574 / FGSC 10173) (Glume blotch fungus).